We begin with the raw amino-acid sequence, 480 residues long: Zinc finger protein ztf-6 (480 aa).

Disordered stretches follow at residues 92–160 (CHDS…TMMV), 174–198 (GTNG…EEHD), 282–307 (LDAG…PTAS), and 328–351 (DANT…MKVP). Composition is skewed to low complexity over residues 95–105 (SATSTTTTVSH), 131–145 (SSIE…SSSV), 174–187 (GTNG…TSSS), and 286–296 (SSENDGSTSSS). 2 consecutive C2H2-type zinc fingers follow at residues 359 to 383 (YICP…FVTH) and 388 to 410 (FNCD…QKIH). A C2H2-type 3; degenerate zinc finger spans residues 416 to 441 (YQCRGCGTNYTTQNGLRLHRQRNPAC). The tract at residues 461–480 (ALSGPLSKNSSPTKQMVSAP) is disordered.

Probable transcription factor, involved in regulation of dopamine neuron lineage specification. May play a role in maintaining robustness of the Wnt/beta-catenin asymmetry pathway. This chain is Zinc finger protein ztf-6, found in Caenorhabditis elegans.